The primary structure comprises 164 residues: 6,7-dimethyl-8-ribityllumazine synthase (164 aa).

5-amino-6-(D-ribitylamino)uracil is bound by residues Y30, A61 to E63, and C85 to I87. E90–T91 contributes to the (2S)-2-hydroxy-3-oxobutyl phosphate binding site. H93 acts as the Proton donor in catalysis. N118 is a 5-amino-6-(D-ribitylamino)uracil binding site. R132 contributes to the (2S)-2-hydroxy-3-oxobutyl phosphate binding site.

The protein belongs to the DMRL synthase family.

The catalysed reaction is (2S)-2-hydroxy-3-oxobutyl phosphate + 5-amino-6-(D-ribitylamino)uracil = 6,7-dimethyl-8-(1-D-ribityl)lumazine + phosphate + 2 H2O + H(+). It participates in cofactor biosynthesis; riboflavin biosynthesis; riboflavin from 2-hydroxy-3-oxobutyl phosphate and 5-amino-6-(D-ribitylamino)uracil: step 1/2. In terms of biological role, catalyzes the formation of 6,7-dimethyl-8-ribityllumazine by condensation of 5-amino-6-(D-ribitylamino)uracil with 3,4-dihydroxy-2-butanone 4-phosphate. This is the penultimate step in the biosynthesis of riboflavin. In Methylobacterium radiotolerans (strain ATCC 27329 / DSM 1819 / JCM 2831 / NBRC 15690 / NCIMB 10815 / 0-1), this protein is 6,7-dimethyl-8-ribityllumazine synthase.